We begin with the raw amino-acid sequence, 493 residues long: Phospholipid transfer protein (493 aa).

A signal peptide spans 1–17 (MVLLWALFLALLAGAHA). Residues Asn-64, Asn-91, Asn-94, Asn-117, and Asn-143 are each glycosylated (N-linked (GlcNAc...) asparagine). Cys-146 and Cys-185 are joined by a disulfide. Asn-245 and Asn-398 each carry an N-linked (GlcNAc...) asparagine glycan.

Belongs to the BPI/LBP/Plunc superfamily. BPI/LBP family. Post-translationally, glycosylation is necessary for secretion and its phospholipid transfer activity. In terms of tissue distribution, highest level expression in the lung, brain and heart with relatively low levels in the liver, skeletal muscle and testis and very low levels found in the spleen and kidney.

It localises to the secreted. It is found in the nucleus. The catalysed reaction is a 1,2-diacyl-sn-glycero-3-phosphocholine(in) = a 1,2-diacyl-sn-glycero-3-phosphocholine(out). It catalyses the reaction a 1,2-diacyl-sn-glycero-3-phosphoethanolamine(in) = a 1,2-diacyl-sn-glycero-3-phosphoethanolamine(out). It carries out the reaction a 1,2-diacyl-sn-glycerol(in) = a 1,2-diacyl-sn-glycerol(out). The enzyme catalyses a 1,2-diacyl-sn-glycero-3-phosphate(in) = a 1,2-diacyl-sn-glycero-3-phosphate(out). The catalysed reaction is a sphingomyelin(in) = a sphingomyelin(out). It catalyses the reaction a 1,2-diacyl-sn-glycero-3-phospho-(1'-sn-glycerol)(in) = a 1,2-diacyl-sn-glycero-3-phospho-(1'-sn-glycerol)(out). It carries out the reaction a 1,2-diacyl-sn-glycero-3-phospho-(1D-myo-inositol)(in) = a 1,2-diacyl-sn-glycero-3-phospho-(1D-myo-inositol)(out). The enzyme catalyses 1-hexadecanoyl-2-(5Z,8Z,11Z,14Z-eicosatetraenoyl)-sn-glycero-3-phosphoethanolamine(in) = 1-hexadecanoyl-2-(5Z,8Z,11Z,14Z-eicosatetraenoyl)-sn-glycero-3-phosphoethanolamine(out). The catalysed reaction is N-(hexadecanoyl)-sphing-4-enine-1-phosphocholine(in) = N-(hexadecanoyl)-sphing-4-enine-1-phosphocholine(out). It catalyses the reaction 1,2-dihexadecanoyl-sn-glycero-3-phosphocholine(in) = 1,2-dihexadecanoyl-sn-glycero-3-phosphocholine(out). Mediates the transfer of phospholipids and free cholesterol from triglyceride-rich lipoproteins (low density lipoproteins or LDL and very low density lipoproteins or VLDL) into high-density lipoproteins (HDL) as well as the exchange of phospholipids between triglyceride-rich lipoproteins themselves. Facilitates the transfer of a spectrum of different lipid molecules, including sphingomyelin, phosphatidylcholine, phosphatidylinositol, phosphatidylglycerol, and phosphatidyl ethanolamine. Plays an important role in HDL remodeling which involves modulating the size and composition of HDL. Also plays a key role in the uptake of cholesterol from peripheral cells and tissues that is subsequently transported to the liver for degradation and excretion. Two distinct forms of PLTP exist in plasma: an active form that can transfer phosphatidylcholine from phospholipid vesicles to HDL, and an inactive form that lacks this capability. The polypeptide is Phospholipid transfer protein (Pltp) (Mus musculus (Mouse)).